The primary structure comprises 191 residues: Cdc42 homolog (191 aa).

Residue 10-17 (GDGAVGKT) participates in GTP binding. Residues 32–40 (YVPTVFDNY) carry the Effector region motif. GTP contacts are provided by residues 57-61 (DTAGQ) and 115-118 (TQID). At Cys-188 the chain carries Cysteine methyl ester. Residue Cys-188 is the site of S-geranylgeranyl cysteine attachment. Residues 189 to 191 (KFL) constitute a propeptide, removed in mature form.

This sequence belongs to the small GTPase superfamily. Rho family. CDC42 subfamily.

Its subcellular location is the cell junction. It is found in the adherens junction. The protein resides in the cell membrane. Regulates mbt kinase activity and is also required to recruit mbt to adherens junctions. Together with mbt, regulates photoreceptor cell morphogenesis. This is Cdc42 homolog from Aedes aegypti (Yellowfever mosquito).